We begin with the raw amino-acid sequence, 131 residues long: Small ribosomal subunit protein uS11 (131 aa).

Belongs to the universal ribosomal protein uS11 family. Part of the 30S ribosomal subunit. Interacts with proteins S7 and S18. Binds to IF-3.

Its function is as follows. Located on the platform of the 30S subunit, it bridges several disparate RNA helices of the 16S rRNA. Forms part of the Shine-Dalgarno cleft in the 70S ribosome. The chain is Small ribosomal subunit protein uS11 from Bacillus licheniformis (strain ATCC 14580 / DSM 13 / JCM 2505 / CCUG 7422 / NBRC 12200 / NCIMB 9375 / NCTC 10341 / NRRL NRS-1264 / Gibson 46).